The sequence spans 650 residues: MGCGTSSKKGNKSKKVIKAALVIQNWYRRYRARLRVRQHYALAIFQSIEYSDEQGQMQLSSFFSFMLENYTKTNNEDSALVTRIFDNTRRESQIKDRDDFLGLIEVPDSYDGPRLQFPLTFTDIHILLQAFKQQQILHAHYVLEVLFEARKVLKQMPNFSHVKTFPAKEITICGDLHGKLDDLMLIFYKNGLPSENNPYVFNGDFVDRGNNSMEILMILLVCFLVYPSDLHLNRGNHEDFMMNLRYGFTKEILQKYKLHGRKILQVLEEVYTWLPIGTIIDNEILVIHGGISESTDLNTLHQLQRNKMKSVLMPPVLGNQETGEKRNKSASNYVEPRKVEPDKTPSEDLTKQEWEQIVDILWSDPRGKKGCYPNTSRGGGCYFGPDVTSKVLSKNQLKMLIRSHECKPDGYEVSHDGKVITVFSASNYYEEGSNRGAYIRLSYGTMPQFFQYQVTSTSCLNPLHQRMNAMESSAFKILKEKMISRKTDLINAFELRDHSRSGRISLAEWAFSMENILGLNLPWRSLSSHLVTIDSSGSVDYMSSFDDIRIEKPTKDMKSNLTETMYRYRSDLKIIFNIIDSDQSGLISMDEFRTMWKLFNAHYKAHIDDSQIDELASIVDFNKDGNIDFNEFLKAFYVVHKYDKPGTSLA.

The IQ domain maps to 16 to 45 (VIKAALVIQNWYRRYRARLRVRQHYALAIF). Positions 124–456 (IHILLQAFKQ…PQFFQYQVTS (333 aa)) are catalytic. Mn(2+) contacts are provided by Asp175, His177, Asp204, and Asn236. Residue His237 is the Proton donor of the active site. His288 is a binding site for Mn(2+). Positions 315-348 (PVLGNQETGEKRNKSASNYVEPRKVEPDKTPSED) are disordered. Residues 335–348 (EPRKVEPDKTPSED) show a composition bias toward basic and acidic residues. A Mn(2+)-binding site is contributed by His404. EF-hand domains are found at residues 484 to 519 (SRKTDLINAFELRDHSRSGRISLAEWAFSMENILGL), 567 to 602 (RYRSDLKIIFNIIDSDQSGLISMDEFRTMWKLFNAH), and 607 to 642 (IDDSQIDELASIVDFNKDGNIDFNEFLKAFYVVHKY). Residues Asp497, Ser499, Ser501, Arg503, Glu508, Asp580, Asp582, Ser584, Glu591, Asp620, Asn622, Asp624, Asn626, and Glu631 each coordinate Ca(2+).

Belongs to the PPP phosphatase family. Requires Mn(2+) as cofactor. It depends on Mg(2+) as a cofactor. In terms of tissue distribution, in the embryo it is almost exclusively expressed in the peripheral nervous system, within sensory neurons of cranial and dorsal root ganglia. Otherwise found in fetal inner ear and a small group of neurons in the midbrain/pons junction.

The catalysed reaction is O-phospho-L-seryl-[protein] + H2O = L-seryl-[protein] + phosphate. It catalyses the reaction O-phospho-L-threonyl-[protein] + H2O = L-threonyl-[protein] + phosphate. Activated by calcium. In terms of biological role, may have a role in the recovery or adaptation response of photoreceptors. May have a role in diverse sensory neurons and in development. The protein is Serine/threonine-protein phosphatase with EF-hands 1 (Ppef1) of Mus musculus (Mouse).